A 204-amino-acid chain; its full sequence is Shikimate kinase (204 aa).

An ATP-binding site is contributed by 35–40; sequence ASGKST. Ser39 lines the Mg(2+) pocket. Positions 57, 81, and 103 each coordinate substrate. Arg142 lines the ATP pocket. Arg169 serves as a coordination point for substrate.

This sequence belongs to the shikimate kinase family. In terms of assembly, monomer. The cofactor is Mg(2+).

Its subcellular location is the cytoplasm. It carries out the reaction shikimate + ATP = 3-phosphoshikimate + ADP + H(+). The protein operates within metabolic intermediate biosynthesis; chorismate biosynthesis; chorismate from D-erythrose 4-phosphate and phosphoenolpyruvate: step 5/7. Catalyzes the specific phosphorylation of the 3-hydroxyl group of shikimic acid using ATP as a cosubstrate. The sequence is that of Shikimate kinase from Salinibacter ruber (strain DSM 13855 / M31).